We begin with the raw amino-acid sequence, 503 residues long: Probable cytosol aminopeptidase (503 aa).

Residues Lys270 and Asp275 each contribute to the Mn(2+) site. Residue Lys282 is part of the active site. The Mn(2+) site is built by Asp293, Asp352, and Glu354. The active site involves Arg356.

This sequence belongs to the peptidase M17 family. Mn(2+) serves as cofactor.

The protein localises to the cytoplasm. The enzyme catalyses Release of an N-terminal amino acid, Xaa-|-Yaa-, in which Xaa is preferably Leu, but may be other amino acids including Pro although not Arg or Lys, and Yaa may be Pro. Amino acid amides and methyl esters are also readily hydrolyzed, but rates on arylamides are exceedingly low.. It carries out the reaction Release of an N-terminal amino acid, preferentially leucine, but not glutamic or aspartic acids.. Presumably involved in the processing and regular turnover of intracellular proteins. Catalyzes the removal of unsubstituted N-terminal amino acids from various peptides. The sequence is that of Probable cytosol aminopeptidase from Edwardsiella ictaluri (strain 93-146).